The primary structure comprises 337 residues: tRNA N6-adenosine threonylcarbamoyltransferase (337 aa).

Residues histidine 111 and histidine 115 each coordinate Fe cation. Residues 134-138 (LVSGG), aspartate 167, glycine 180, and asparagine 272 contribute to the substrate site. Residue aspartate 300 coordinates Fe cation.

Belongs to the KAE1 / TsaD family. Fe(2+) serves as cofactor.

The protein localises to the cytoplasm. The catalysed reaction is L-threonylcarbamoyladenylate + adenosine(37) in tRNA = N(6)-L-threonylcarbamoyladenosine(37) in tRNA + AMP + H(+). Required for the formation of a threonylcarbamoyl group on adenosine at position 37 (t(6)A37) in tRNAs that read codons beginning with adenine. Is involved in the transfer of the threonylcarbamoyl moiety of threonylcarbamoyl-AMP (TC-AMP) to the N6 group of A37, together with TsaE and TsaB. TsaD likely plays a direct catalytic role in this reaction. The protein is tRNA N6-adenosine threonylcarbamoyltransferase of Escherichia coli O127:H6 (strain E2348/69 / EPEC).